A 311-amino-acid polypeptide reads, in one-letter code: Acetaldehyde dehydrogenase 2 (311 aa).

11 to 14 (SGNI) is a binding site for NAD(+). C131 acts as the Acyl-thioester intermediate in catalysis. NAD(+)-binding positions include 162-170 (SAGPGTRAN) and N289.

This sequence belongs to the acetaldehyde dehydrogenase family.

It catalyses the reaction acetaldehyde + NAD(+) + CoA = acetyl-CoA + NADH + H(+). This chain is Acetaldehyde dehydrogenase 2 (mhpF), found in Azotobacter vinelandii (strain DJ / ATCC BAA-1303).